A 200-amino-acid polypeptide reads, in one-letter code: Superoxide dismutase [Mn] 1 (200 aa).

Positions 29, 76, 158, and 162 each coordinate Mn(2+).

This sequence belongs to the iron/manganese superoxide dismutase family. Requires Mn(2+) as cofactor.

The enzyme catalyses 2 superoxide + 2 H(+) = H2O2 + O2. Its function is as follows. Destroys superoxide anion radicals which are normally produced within the cells and which are toxic to biological systems. The protein is Superoxide dismutase [Mn] 1 (sod1) of Haloferax volcanii (strain ATCC 29605 / DSM 3757 / JCM 8879 / NBRC 14742 / NCIMB 2012 / VKM B-1768 / DS2) (Halobacterium volcanii).